The primary structure comprises 199 residues: Guanylyl cyclase-activating protein 1 (199 aa).

A lipid anchor (N-myristoyl glycine) is attached at glycine 2. Asparagine 3 bears the Deamidated asparagine mark. EF-hand domains are found at residues 13-48 (SATE…KNLS), 50-85 (SANK…VLKG), 86-121 (KVDQ…IRAI), and 129-164 (TAEE…DEVL). Residues aspartate 63, asparagine 65, aspartate 67, tyrosine 69, glutamate 74, aspartate 99, aspartate 101, asparagine 103, cysteine 105, glutamate 110, aspartate 142, asparagine 144, aspartate 146, glutamate 148, and glutamate 153 each coordinate Ca(2+).

In terms of tissue distribution, retina, in rod and cone outer segments, and pineal gland.

In terms of biological role, stimulates retinal guanylyl cyclase when free calcium ions concentration is low and inhibits guanylyl cyclase when free calcium ions concentration is elevated. This Ca(2+)-sensitive regulation of retinal guanylyl cyclase is a key event in recovery of the dark state of rod photoreceptors following light exposure. The protein is Guanylyl cyclase-activating protein 1 (GUCA1A) of Gallus gallus (Chicken).